A 1197-amino-acid chain; its full sequence is Protein timeless homolog (1197 aa).

The tract at residues 1–309 (MDLYMMNCEL…GLHNLQNYSS (309 aa)) is required for homodimerization and for interaction with CRY1 and CHEK1. Residue Ser-281 is modified to Phosphoserine. Disordered regions lie at residues 647 to 674 (STPLPRQQEPEEGDAEEEEEEEEEEELQ) and 943 to 1002 (RKKL…SAEN). The span at 656–673 (PEEGDAEEEEEEEEEEEL) shows a compositional bias: acidic residues. The interval 810–949 (SHRAPLWSPE…KKRRKKLAPS (140 aa)) is DNA-binding domain. The span at 963–985 (QEDPEEEDEHLPEDESEDEESEE) shows a compositional bias: acidic residues. Positions 986-999 (GLPSGQGQGSSSLS) are enriched in low complexity. The interval 997 to 1095 (SLSAENLGES…TQLRRVAASL (99 aa)) is interaction with PARP1. Residues Ser-1071 and Ser-1084 each carry the phosphoserine modification. The interval 1079–1197 (IPAKLSSTQL…KRFQIEDEDD (119 aa)) is required for nuclear localization. Thr-1086 is modified (phosphothreonine). Residues 1088–1197 (LRRVAASLSQ…KRFQIEDEDD (110 aa)) form a disordered region. Composition is skewed to acidic residues over residues 1099–1109 (ENEEEREEEPE) and 1143–1153 (TEEEATGEEEW). Position 1165 is a phosphoserine (Ser-1165).

It belongs to the timeless family. Monomer. Homodimer or homomultimer. Component of the circadian core oscillator, which includes the CRY proteins, CLOCK or NPAS2, ARTNL/BMAL1 or ARTNL2/BMAL2, CSKN1D and/or CSNK1E, TIMELESS, and the PER proteins. Interacts directly with PER2; the interaction with PER2 is via its second PAS domain. Interacts directly with PER1 and PER3. Interacts with CRY1. Interacts with CRY2. Interacts with CHEK1, ATR and ATRIP. Interacts with CLSPN. Interacts (via N-terminus) with TIPIN. The TIMELESS-TIPIN heterodimer binds preferably to guanine-rich quadruplex-forming (G4) DNA structures. Associates with the MCM2-7 complex. Interacts with DNA polymerases alpha, delta and epsilon. Interacts with DDX11; this interaction increases recruitment of both proteins onto chromatin in response to replication stress induction by hydroxyurea. Interacts with PARP1; interaction is direct and independent of poly-ADP-ribose. Predominantly and robustly expressed in proliferative organs (spleen, thymus, intestine and testis) compared to those more differentiated such as kidney and liver (at protein level). Expressed in all tissues examined including brain, heart, lung, liver, skeletal muscle, kidney, placenta, pancreas, spleen, thymus and testis. Strongly expressed in the suprachiasmatic nucleus (SCN) and pars tuberalis, moderately in the cingulate cortex, pyrimidal cell layer of the piriform cortex, periventricular part of the caudate putamen, and granular layer of the cerebellum, and weakly in the cerebral cortex, gyrus dentatus, hippocampus and thalamic nuclei. In embryonic kidney, expression is highest in regions of active ureteric bud cell branching.

The protein resides in the nucleus. It is found in the chromosome. Functionally, plays an important role in the control of DNA replication, maintenance of replication fork stability, maintenance of genome stability throughout normal DNA replication, DNA repair and in the regulation of the circadian clock. Required to stabilize replication forks during DNA replication by forming a complex with TIPIN: this complex regulates DNA replication processes under both normal and stress conditions, stabilizes replication forks and influences both CHEK1 phosphorylation and the intra-S phase checkpoint in response to genotoxic stress. During DNA replication, inhibits the CMG complex ATPase activity and activates DNA polymerases catalytic activities, coupling DNA unwinding and DNA synthesis. TIMELESS promotes TIPIN nuclear localization. Plays a role in maintaining processive DNA replication past genomic guanine-rich DNA sequences that form G-quadruplex (G4) structures, possibly together with DDX1. Involved in cell survival after DNA damage or replication stress by promoting DNA repair. In response to double-strand breaks (DSBs), accumulates at DNA damage sites and promotes homologous recombination repair via its interaction with PARP1. May be specifically required for the ATR-CHEK1 pathway in the replication checkpoint induced by hydroxyurea or ultraviolet light. Involved in the determination of period length and in the DNA damage-dependent phase advancing of the circadian clock. Negatively regulates CLOCK|NPAS2-ARTNL/BMAL1|ARTNL2/BMAL2-induced transactivation of PER1 possibly via translocation of PER1 into the nucleus. May also play an important role in epithelial cell morphogenesis and formation of branching tubules. This Mus musculus (Mouse) protein is Protein timeless homolog.